The following is a 316-amino-acid chain: Transaldolase 2 (316 aa).

The active-site Schiff-base intermediate with substrate is the Lys-131.

The protein belongs to the transaldolase family. Type 1 subfamily. In terms of assembly, homodimer.

The protein resides in the cytoplasm. The catalysed reaction is D-sedoheptulose 7-phosphate + D-glyceraldehyde 3-phosphate = D-erythrose 4-phosphate + beta-D-fructose 6-phosphate. Its pathway is carbohydrate degradation; pentose phosphate pathway; D-glyceraldehyde 3-phosphate and beta-D-fructose 6-phosphate from D-ribose 5-phosphate and D-xylulose 5-phosphate (non-oxidative stage): step 2/3. In terms of biological role, transaldolase is important for the balance of metabolites in the pentose-phosphate pathway. The protein is Transaldolase 2 of Shigella sonnei (strain Ss046).